A 255-amino-acid polypeptide reads, in one-letter code: Hydroxyacylglutathione hydrolase (255 aa).

The Zn(2+) site is built by H56, H58, D60, H61, H114, D133, and H171.

This sequence belongs to the metallo-beta-lactamase superfamily. Glyoxalase II family. Monomer. Requires Zn(2+) as cofactor.

It catalyses the reaction an S-(2-hydroxyacyl)glutathione + H2O = a 2-hydroxy carboxylate + glutathione + H(+). Its pathway is secondary metabolite metabolism; methylglyoxal degradation; (R)-lactate from methylglyoxal: step 2/2. Its function is as follows. Thiolesterase that catalyzes the hydrolysis of S-D-lactoyl-glutathione to form glutathione and D-lactic acid. This Bradyrhizobium diazoefficiens (strain JCM 10833 / BCRC 13528 / IAM 13628 / NBRC 14792 / USDA 110) protein is Hydroxyacylglutathione hydrolase.